We begin with the raw amino-acid sequence, 398 residues long: Probable L-tyrosine/L-aspartate decarboxylase (398 aa).

The residue at position 242 (Lys-242) is an N6-(pyridoxal phosphate)lysine.

This sequence belongs to the group II decarboxylase family. MfnA subfamily. The cofactor is pyridoxal 5'-phosphate.

The enzyme catalyses L-tyrosine + H(+) = tyramine + CO2. The catalysed reaction is L-aspartate + H(+) = beta-alanine + CO2. It functions in the pathway cofactor biosynthesis; methanofuran biosynthesis. It participates in cofactor biosynthesis; coenzyme A biosynthesis. In terms of biological role, catalyzes the decarboxylation of L-tyrosine to produce tyramine for methanofuran biosynthesis. Can also catalyze the decarboxylation of L-aspartate to produce beta-alanine for coenzyme A (CoA) biosynthesis. The sequence is that of Probable L-tyrosine/L-aspartate decarboxylase from Methanosarcina mazei (strain ATCC BAA-159 / DSM 3647 / Goe1 / Go1 / JCM 11833 / OCM 88) (Methanosarcina frisia).